Consider the following 363-residue polypeptide: Replication factor C subunit 4 (363 aa).

Met1 is modified (N-acetylmethionine). Residues 1–36 (MQAFLKGTSISTKPPLTKDRGVAASAGSSGENKKAK) form a disordered region. An N6-acetyllysine mark is found at Lys6 and Lys13. 78–85 (GPPGTGKT) provides a ligand contact to ATP.

This sequence belongs to the activator 1 small subunits family. Subunit of the RFC complex, an heteropentameric complex consisting of a large subunit RFC1 and four small subunits RFC2, RFC3, RFC4 and RFC5; the RFC complex interacts with PCNA. Forms an heterotetrameric complex with RFC2, RFC3 and RFC5; this complex has ATPase activity but is not stimulated by PCNA. The heterotetramer of subunits RFC2, RFC3, RFC4 and RFC5 interacts with RAD17. Interacts with ATAD5. Interacts with CTF18. Interacts with CNTD1; this interaction facilitates crossover formation.

The protein resides in the nucleus. Subunit of the replication factor C (RFC) complex which acts during elongation of primed DNA templates by DNA polymerases delta and epsilon, and is necessary for ATP-dependent loading of proliferating cell nuclear antigen (PCNA) onto primed DNA. The RFC4 subunit probably functions as a scaffold on which the other complex components can assemble. This is Replication factor C subunit 4 (RFC4) from Homo sapiens (Human).